The primary structure comprises 325 residues: Thiamine-monophosphate kinase (325 aa).

The Mg(2+) site is built by D27 and D44. Position 51 (H51) interacts with substrate. Mg(2+) is bound at residue D73. ATP contacts are provided by residues Y103, 120 to 121 (GD), and R147. D121 provides a ligand contact to Mg(2+). D215 is a binding site for Mg(2+). S217 is an ATP binding site. D218 contributes to the Mg(2+) binding site. The substrate site is built by E264 and Y321.

Belongs to the thiamine-monophosphate kinase family.

The enzyme catalyses thiamine phosphate + ATP = thiamine diphosphate + ADP. It participates in cofactor biosynthesis; thiamine diphosphate biosynthesis; thiamine diphosphate from thiamine phosphate: step 1/1. Functionally, catalyzes the ATP-dependent phosphorylation of thiamine-monophosphate (TMP) to form thiamine-pyrophosphate (TPP), the active form of vitamin B1. The protein is Thiamine-monophosphate kinase of Bacillus subtilis (strain 168).